We begin with the raw amino-acid sequence, 727 residues long: Ankyrin repeat domain-containing protein 6 (727 aa).

ANK repeat units follow at residues 9–38 (ALSERLLVAAYKGQTENVVQLINKGARVAV), 41–70 (HGRTPLHLAANKGHLPVVQILLKAGCDLDV), 74–103 (GDQTALHRATVVGNTEIIAALIHEGCALDR), 107–136 (DGNTALHEASWHGFSQSAKLLIKAGANVLA), 140–169 (AGNTALHLACQNSHSQSTRVLLLAGSRADL), 173–202 (AGDTCLHVAARYNHLSIIRLLLTAFCSVHE), 206–235 (AGDTALHVAAALNHKKVAKILLEAGADTTI), and 239–268 (AGQTPLETARYHNNPEVALLLTKAPQVLRF). Residues 277–386 (KRERLKEERR…HRCSSPPPPH (110 aa)) are disordered. The segment covering 280-296 (RLKEERRAQSVPRDEVA) has biased composition (basic and acidic residues). The span at 298–312 (SKGSVSAGDTPSSEQ) shows a compositional bias: polar residues. Positions 314–324 (VARKEEAREEF) are enriched in basic and acidic residues. Positions 363-379 (KNLHAHNHPKKRNRHRC) are enriched in basic residues. A coiled-coil region spans residues 417 to 446 (LINKLENQLEATVEEIKAELGSVQDKMNTK). A compositionally biased stretch (low complexity) spans 548 to 557 (PAAASDSSPP). Disordered stretches follow at residues 548-586 (PAAASDSSPPVVRPKEKALNSTATQRLQQELSSSDCTGS) and 601-657 (NEAA…TGPH). Residues 566–584 (LNSTATQRLQQELSSSDCT) are compositionally biased toward polar residues. Over residues 622 to 633 (KSGKSGPTRHRA) the composition is skewed to basic residues. The stretch at 682–727 (WYERKIEEARSQANQKAQQDKATLKEHIKSLEEELAKLRTRVQKEN) forms a coiled coil.

Interacts with AXN1, AXN2 and CSNK1E/CKI-epsilon.

Recruits CKI-epsilon to the beta-catenin degradation complex that consists of AXN1 or AXN2 and GSK3-beta and allows efficient phosphorylation of beta-catenin, thereby inhibiting beta-catenin/Tcf signals. This Homo sapiens (Human) protein is Ankyrin repeat domain-containing protein 6 (ANKRD6).